The primary structure comprises 433 residues: Tol-Pal system protein TolB (433 aa).

The signal sequence occupies residues 1-26; sequence MNKLRLFRSFFAFLLPFGMATGAAHG.

Belongs to the TolB family. The Tol-Pal system is composed of five core proteins: the inner membrane proteins TolA, TolQ and TolR, the periplasmic protein TolB and the outer membrane protein Pal. They form a network linking the inner and outer membranes and the peptidoglycan layer.

The protein resides in the periplasm. Functionally, part of the Tol-Pal system, which plays a role in outer membrane invagination during cell division and is important for maintaining outer membrane integrity. The sequence is that of Tol-Pal system protein TolB from Methylobacillus flagellatus (strain ATCC 51484 / DSM 6875 / VKM B-1610 / KT).